Here is a 318-residue protein sequence, read N- to C-terminus: Probable plastid-lipid-associated protein 1, chloroplastic (318 aa).

Residues M1–R55 constitute a chloroplast transit peptide. Position 57 is a phosphothreonine (T57).

It belongs to the PAP/fibrillin family. Interacts (via N-terminus) with ABI2. In terms of tissue distribution, expressed in flower buds. Detected in tapetal cells, endothecium and connective in anthers and in subepidermal cells in filaments.

The protein localises to the plastid. Its subcellular location is the chloroplast. The protein resides in the plastoglobule. It is found in the chloroplast thylakoid. Probably involved in light/cold stress-related jasmonate (JA) biosynthesis. Contributes to the protection of photosystem II (PSII) against light stress. In Arabidopsis thaliana (Mouse-ear cress), this protein is Probable plastid-lipid-associated protein 1, chloroplastic (PAP1).